A 65-amino-acid chain; its full sequence is Large ribosomal subunit protein bL35 (65 aa).

Belongs to the bacterial ribosomal protein bL35 family.

The sequence is that of Large ribosomal subunit protein bL35 from Borrelia duttonii (strain Ly).